A 377-amino-acid chain; its full sequence is Succinyl-diaminopimelate desuccinylase (377 aa).

His68 serves as a coordination point for Zn(2+). Asp70 is an active-site residue. Asp101 provides a ligand contact to Zn(2+). Glu135 acts as the Proton acceptor in catalysis. Zn(2+) contacts are provided by Glu136, Glu164, and His350.

It belongs to the peptidase M20A family. DapE subfamily. As to quaternary structure, homodimer. Requires Zn(2+) as cofactor. Co(2+) serves as cofactor.

The enzyme catalyses N-succinyl-(2S,6S)-2,6-diaminopimelate + H2O = (2S,6S)-2,6-diaminopimelate + succinate. It participates in amino-acid biosynthesis; L-lysine biosynthesis via DAP pathway; LL-2,6-diaminopimelate from (S)-tetrahydrodipicolinate (succinylase route): step 3/3. Functionally, catalyzes the hydrolysis of N-succinyl-L,L-diaminopimelic acid (SDAP), forming succinate and LL-2,6-diaminopimelate (DAP), an intermediate involved in the bacterial biosynthesis of lysine and meso-diaminopimelic acid, an essential component of bacterial cell walls. The protein is Succinyl-diaminopimelate desuccinylase of Vibrio cholerae serotype O1 (strain ATCC 39541 / Classical Ogawa 395 / O395).